The primary structure comprises 404 residues: Cysteine desulfurase IscS (404 aa).

Residues 85–86, Asn165, Gln193, 213–215, and Thr251 each bind pyridoxal 5'-phosphate; these read GT and SGH. The active-site Cysteine persulfide intermediate is Cys338. Residue Cys338 coordinates [2Fe-2S] cluster.

It belongs to the class-V pyridoxal-phosphate-dependent aminotransferase family. NifS/IscS subfamily. As to quaternary structure, homodimer. Forms a heterotetramer with IscU, interacts with other sulfur acceptors. Requires pyridoxal 5'-phosphate as cofactor.

The protein resides in the cytoplasm. The enzyme catalyses (sulfur carrier)-H + L-cysteine = (sulfur carrier)-SH + L-alanine. Its pathway is cofactor biosynthesis; iron-sulfur cluster biosynthesis. In terms of biological role, master enzyme that delivers sulfur to a number of partners involved in Fe-S cluster assembly, tRNA modification or cofactor biosynthesis. Catalyzes the removal of elemental sulfur atoms from cysteine to produce alanine. Functions as a sulfur delivery protein for Fe-S cluster synthesis onto IscU, an Fe-S scaffold assembly protein, as well as other S acceptor proteins. In Methanosarcina thermophila, this protein is Cysteine desulfurase IscS.